A 558-amino-acid chain; its full sequence is Adenine deaminase (558 aa).

Belongs to the metallo-dependent hydrolases superfamily. Adenine deaminase family. Requires Mn(2+) as cofactor.

The enzyme catalyses adenine + H2O + H(+) = hypoxanthine + NH4(+). The polypeptide is Adenine deaminase (Methanoregula boonei (strain DSM 21154 / JCM 14090 / 6A8)).